We begin with the raw amino-acid sequence, 328 residues long: GTP 3',8-cyclase (328 aa).

Positions 1-229 constitute a Radical SAM core domain; that stretch reads MNQVDYLRIS…DAQVRGSGPA (229 aa). Residue Arg8 participates in GTP binding. [4Fe-4S] cluster is bound by residues Cys15 and Cys19. Tyr21 contributes to the S-adenosyl-L-methionine binding site. Position 22 (Cys22) interacts with [4Fe-4S] cluster. Arg60 is a binding site for GTP. Gly64 serves as a coordination point for S-adenosyl-L-methionine. Thr91 is a GTP binding site. Position 115 (Ser115) interacts with S-adenosyl-L-methionine. Lys155 is a binding site for GTP. Met189 lines the S-adenosyl-L-methionine pocket. [4Fe-4S] cluster contacts are provided by Cys252 and Cys255. Residue 257 to 259 participates in GTP binding; it reads RMR. Residue Cys269 participates in [4Fe-4S] cluster binding.

Belongs to the radical SAM superfamily. MoaA family. Monomer and homodimer. Requires [4Fe-4S] cluster as cofactor.

It catalyses the reaction GTP + AH2 + S-adenosyl-L-methionine = (8S)-3',8-cyclo-7,8-dihydroguanosine 5'-triphosphate + 5'-deoxyadenosine + L-methionine + A + H(+). Its pathway is cofactor biosynthesis; molybdopterin biosynthesis. Functionally, catalyzes the cyclization of GTP to (8S)-3',8-cyclo-7,8-dihydroguanosine 5'-triphosphate. In Trichormus variabilis (strain ATCC 29413 / PCC 7937) (Anabaena variabilis), this protein is GTP 3',8-cyclase.